The chain runs to 86 residues: Toxin Tpa4 (86 aa).

A signal peptide spans 1–19; that stretch reads MNYFVLIAVACLLTAGTES. In terms of domain architecture, LCN-type CS-alpha/beta spans 21-82; sequence KDGYPLEYDN…EPIKTSGRCR (62 aa). Intrachain disulfides connect cysteine 31–cysteine 81, cysteine 35–cysteine 57, cysteine 43–cysteine 64, and cysteine 47–cysteine 66. At proline 83 the chain carries Proline amide.

This sequence belongs to the long (4 C-C) scorpion toxin superfamily. Sodium channel inhibitor family. Alpha subfamily. As to expression, expressed by the venom gland.

The protein localises to the secreted. Alpha toxins bind voltage-independently at site-3 of sodium channels (Nav) and inhibit the inactivation of the activated channels, thereby blocking neuronal transmission. This chain is Toxin Tpa4, found in Tityus pachyurus (Colombian scorpion).